A 265-amino-acid polypeptide reads, in one-letter code: Polyglutamine-binding protein 1 (265 aa).

One can recognise a WW domain in the interval 46–80; sequence EGLPPSWYKVFDPSCGLPYYWNADTDLVSWLSPHD. Ser94 carries the post-translational modification Phosphoserine. Residues 94-265 are disordered; the sequence is SSNADAEEKL…AEASRTKQQD (172 aa). Residues 99-175 are compositionally biased toward basic and acidic residues; that stretch reads AEEKLDRSHD…DKADREEGKE (77 aa). 15 tandem repeats follow at residues 104 to 110, 111 to 117, 118 to 124, 125 to 131, 132 to 138, 139 to 140, 141 to 142, 143 to 144, 150 to 151, 152 to 153, 154 to 155, 156 to 157, 158 to 159, 160 to 161, and 162 to 163. Positions 104–138 are 5 X 7 AA approximate tandem repeats of D-R-[SG]-H-D-K-S; the sequence is DRSHDKSDRGHDKSDRSHEKLDRGHDKSDRGHDKS. Positions 139 to 144 are 3 X 2 AA tandem repeats of [DE]-R; sequence DRDRER. A 7 X 2 AA tandem repeats of [DE]-R region spans residues 150–163; that stretch reads DRERERDRERDRDR. The segment at 245-255 is important for interaction with TXNL4A; sequence YPSPGAVLRAN. Ser247 is modified (phosphoserine).

In terms of assembly, interacts with POU3F2/Brn-2, ATXN1, TXNL4A, HTT and AR. Interaction with ATXN1 correlates positively with the length of the polyglutamine tract. Interacts with RNA polymerase II large subunit in a phosphorylation-dependent manner. Forms a ternary complex with ATXN1 mutant and phosphorylated RNA polymerase II. Interacts (via C-terminus) with TXNL4A and CD2BP2. Interacts (via WW domain) with ATN1 and SF3B1, and may interact with additional splice factors. Interacts (via WW domain) with WBP11; Leading to reduce interaction between PQBP1 and TXNL4A. Interacts with CAPRIN1. Interacts with DDX1. Interacts with SFPQ. Interacts with KHSRP.

Its subcellular location is the nucleus. It localises to the nucleus speckle. The protein localises to the cytoplasmic granule. Its function is as follows. Intrinsically disordered protein that acts as a scaffold, and which is involved in different processes, such as pre-mRNA splicing, transcription regulation, innate immunity and neuron development. Interacts with splicing-related factors via the intrinsically disordered region and regulates alternative splicing of target pre-mRNA species. May suppress the ability of POU3F2 to transactivate the DRD1 gene in a POU3F2 dependent manner. Can activate transcription directly or via association with the transcription machinery. May be involved in ATXN1 mutant-induced cell death. The interaction with ATXN1 mutant reduces levels of phosphorylated RNA polymerase II large subunit. Involved in the assembly of cytoplasmic stress granule, possibly by participating in the transport of neuronal RNA granules. Also acts as an innate immune sensor of infection by retroviruses, by detecting the presence of reverse-transcribed DNA in the cytosol. Directly binds retroviral reverse-transcribed DNA in the cytosol and interacts with CGAS, leading to activate the cGAS-STING signaling pathway, triggering type-I interferon production. This chain is Polyglutamine-binding protein 1 (PQBP1), found in Gorilla gorilla gorilla (Western lowland gorilla).